A 98-amino-acid chain; its full sequence is Prostate and testis expressed protein 3 (98 aa).

The N-terminal stretch at 1-20 (MNKHFLLLFSLFYFIVEATS) is a signal peptide. In terms of domain architecture, UPAR/Ly6 spans 21-97 (LKCVTCHLRT…CCNSDFCNFR (77 aa)). 4 cysteine pairs are disulfide-bonded: Cys-23–Cys-50, Cys-26–Cys-35, Cys-42–Cys-68, and Cys-72–Cys-88.

This sequence belongs to the PATE family.

The protein localises to the secreted. The sequence is that of Prostate and testis expressed protein 3 (Pate3) from Mus musculus (Mouse).